Reading from the N-terminus, the 221-residue chain is UPF0758 protein YicR (221 aa).

One can recognise an MPN domain in the interval 99–221 (ALLSPEMTRE…YVSFAERGWI (123 aa)). His-170, His-172, and Asp-183 together coordinate Zn(2+). The short motif at 170–183 (HNHPSGCAEPSKAD) is the JAMM motif element.

The protein belongs to the UPF0758 family. YicR subfamily.

This Salmonella agona (strain SL483) protein is UPF0758 protein YicR.